Here is a 268-residue protein sequence, read N- to C-terminus: Protein DEEPER ROOTING 1 (268 aa).

Over residues 11-21 the composition is skewed to low complexity; that stretch reads LNGKQGNKKPN. Positions 11-39 are disordered; that stretch reads LNGKQGNKKPNTVPITTHPAKQEPREEFS. Positions 30–39 are enriched in basic and acidic residues; that stretch reads AKQEPREEFS. The IGT motif motif lies at 44–50; it reads GLLAIGT. The disordered stretch occupies residues 220–246; it reads SRAASMKKYLEDRQIPTKKESNTEDDT. Residues 227–246 are compositionally biased toward basic and acidic residues; sequence KYLEDRQIPTKKESNTEDDT.

The protein belongs to the LAZY family. In terms of tissue distribution, expressed in roots.

Involved in the development of the root system architecture by influencing lateral root angles and primary root length. The polypeptide is Protein DEEPER ROOTING 1 (Prunus persica (Peach)).